A 661-amino-acid polypeptide reads, in one-letter code: Putative core protein L410 (661 aa).

Residues 1–11 (MADNKGRRDTF) are compositionally biased toward basic and acidic residues. The segment at 1–26 (MADNKGRRDTFDVSGDTNTNATSNKR) is disordered. The span at 15–25 (GDTNTNATSNK) shows a compositional bias: polar residues. Positions 112–140 (KKENKWSDKEYDEFRKELTNLLTGNRALE) form a coiled coil.

Its subcellular location is the virion. This Acanthamoeba polyphaga (Amoeba) protein is Putative core protein L410.